Reading from the N-terminus, the 148-residue chain is Large ribosomal subunit protein uL13 (148 aa).

The interval 128–148 is disordered; sequence PEHPHQAQNPQPFEINAKVEK.

Belongs to the universal ribosomal protein uL13 family. Part of the 50S ribosomal subunit.

In terms of biological role, this protein is one of the early assembly proteins of the 50S ribosomal subunit, although it is not seen to bind rRNA by itself. It is important during the early stages of 50S assembly. This is Large ribosomal subunit protein uL13 from Saccharopolyspora erythraea (strain ATCC 11635 / DSM 40517 / JCM 4748 / NBRC 13426 / NCIMB 8594 / NRRL 2338).